A 392-amino-acid polypeptide reads, in one-letter code: 1-deoxy-D-xylulose 5-phosphate reductoisomerase (392 aa).

Positions 10, 11, 12, 13, and 124 each coordinate NADPH. Lysine 125 is a 1-deoxy-D-xylulose 5-phosphate binding site. Glutamate 126 is an NADPH binding site. Residue aspartate 150 coordinates Mn(2+). 1-deoxy-D-xylulose 5-phosphate is bound by residues serine 151, glutamate 152, serine 180, and histidine 203. Glutamate 152 is a binding site for Mn(2+). An NADPH-binding site is contributed by glycine 209. 1-deoxy-D-xylulose 5-phosphate contacts are provided by serine 216, asparagine 221, lysine 222, and glutamate 225. Glutamate 225 contacts Mn(2+).

Belongs to the DXR family. The cofactor is Mg(2+). Mn(2+) serves as cofactor.

The enzyme catalyses 2-C-methyl-D-erythritol 4-phosphate + NADP(+) = 1-deoxy-D-xylulose 5-phosphate + NADPH + H(+). It functions in the pathway isoprenoid biosynthesis; isopentenyl diphosphate biosynthesis via DXP pathway; isopentenyl diphosphate from 1-deoxy-D-xylulose 5-phosphate: step 1/6. Its function is as follows. Catalyzes the NADPH-dependent rearrangement and reduction of 1-deoxy-D-xylulose-5-phosphate (DXP) to 2-C-methyl-D-erythritol 4-phosphate (MEP). This chain is 1-deoxy-D-xylulose 5-phosphate reductoisomerase, found in Saccharophagus degradans (strain 2-40 / ATCC 43961 / DSM 17024).